A 216-amino-acid polypeptide reads, in one-letter code: Peptide methionine sulfoxide reductase MsrA (216 aa).

Cysteine 54 is a catalytic residue.

It belongs to the MsrA Met sulfoxide reductase family.

The catalysed reaction is L-methionyl-[protein] + [thioredoxin]-disulfide + H2O = L-methionyl-(S)-S-oxide-[protein] + [thioredoxin]-dithiol. It carries out the reaction [thioredoxin]-disulfide + L-methionine + H2O = L-methionine (S)-S-oxide + [thioredoxin]-dithiol. Its function is as follows. Has an important function as a repair enzyme for proteins that have been inactivated by oxidation. Catalyzes the reversible oxidation-reduction of methionine sulfoxide in proteins to methionine. This chain is Peptide methionine sulfoxide reductase MsrA, found in Xylella fastidiosa (strain Temecula1 / ATCC 700964).